Consider the following 1200-residue polypeptide: Metabotropic glycine receptor (1200 aa).

A signal peptide spans 1-24; that stretch reads MGAMAYSLLFCLLLAHLGLGEVGA. The disordered stretch occupies residues 25-62; sequence SLDPPGRPDSPRERTPRGKQHGQQLPRASAPDPSIPWS. Over 25–417 the chain is Extracellular; sequence SLDPPGRPDS…CFVQEDKYLR (393 aa). A cache-like region region spans residues 85–281; sequence YLYTGDFHQL…CENGSYKPGW (197 aa). N-linked (GlcNAc...) asparagine glycans are attached at residues asparagine 98 and asparagine 143. A disulfide bond links cysteine 99 and cysteine 272. 2 residues coordinate glycine: serine 172 and arginine 173. N-linked (GlcNAc...) asparagine glycosylation occurs at asparagine 215. The tract at residues 234–253 is disordered; that stretch reads LHRRGSNQGPRGLGHSWRRR. Glutamate 271 contacts glycine. Asparagine 274 carries an N-linked (GlcNAc...) asparagine glycan. Position 307 (aspartate 307) interacts with glycine. N-linked (GlcNAc...) asparagine glycosylation occurs at asparagine 333. The helical transmembrane segment at 418-439 threads the bilayer; that stretch reads LAIISFQALCMLLDFVSMLVVY. At 440–451 the chain is on the cytoplasmic side; sequence HFRKAKSIRASG. Residues 452–474 form a helical membrane-spanning segment; the sequence is LILLETILFGSLLLYFPVVILYF. Residues 475–478 are Extracellular-facing; that stretch reads EPST. Residues 479-501 form a helical membrane-spanning segment; the sequence is FRCILLRWARLLGFATVYGTVTL. The cysteines at positions 481 and 573 are disulfide-linked. Residues 502–525 lie on the Cytoplasmic side of the membrane; that stretch reads KLHRVLKVFLSRTAQRIPYMTGGR. Residues 526–547 traverse the membrane as a helical segment; it reads VMRMLAVIVLVVFWFLVGWTSS. The Extracellular portion of the chain corresponds to 548–576; the sequence is MCQNLERDILLVGQGQTSDHLTFNMCLID. Residues 577–597 form a helical membrane-spanning segment; it reads RWDYMTAVAEFLFLLWGIYLC. At 598–611 the chain is on the cytoplasmic side; that stretch reads YAVRTVPSAFHEPR. A helical transmembrane segment spans residues 612-633; sequence YMAVAVHNELIITAIFHTIRFV. At 634–642 the chain is on the extracellular side; the sequence is LASRLQPDW. A helical transmembrane segment spans residues 643–664; sequence MLMLYFAHAHLTVTVTIGLLLI. Residues 665–1200 are Cytoplasmic-facing; the sequence is PKFSHSSNNP…SANKIPGPQK (536 aa). A phosphoserine mark is found at serine 694, serine 705, and serine 708. A disordered region spans residues 757–875; the sequence is RITEIPETVS…EAESTESVPL (119 aa). 2 stretches are compositionally biased toward basic and acidic residues: residues 769 to 781 and 819 to 828; these read CSKE…DHSA and STYDHVRDQT. Residue lysine 774 forms a Glycyl lysine isopeptide (Lys-Gly) (interchain with G-Cter in ubiquitin) linkage. Over residues 845-856 the composition is skewed to low complexity; it reads ENSTLESLSSKK. A phosphoserine mark is found at serine 865 and serine 944. Residues 947 to 988 are disordered; sequence DNVETIPNSGHMEEPRKPQKSGIMKQQRVSLPTANPDVSSGI. The segment covering 973-988 has biased composition (polar residues); that stretch reads QRVSLPTANPDVSSGI. A VCPWE motif 1 motif is present at residues 1000-1004; it reads VCPWE. Serine 1059 carries the post-translational modification Phosphoserine. Positions 1065–1069 match the VCPWE motif 2 motif; that stretch reads VCPWE. Serine 1074 carries the phosphoserine modification. Residues 1130–1160 form a disordered region; it reads QMGDQEKQTSSSVDIIPGSCNSSNNSHQPLT. The VCPWE motif 3 motif lies at 1165 to 1169; it reads VCPWE. The disordered stretch occupies residues 1177-1200; the sequence is NAERSVTLPASSALSANKIPGPQK. Positions 1178–1191 are enriched in polar residues; that stretch reads AERSVTLPASSALS.

The protein belongs to the G-protein coupled receptor 3 family. As to quaternary structure, homodimer. Associates with the RGS7-GNB5 complex, promoting its localization to the cell membrane and regulating its GTPase activator activity. Interacts (via VCPWE motifs) with GNAO1. Interacts with GPC4. Interacts with EGFLAM. Highly expressed in brain. Expressed in several brain regions including the cerebral cortex, hippocampus, cerebellum and caudate putamen. Only expressed in neurons, and not in microglia, oligodendrocytes or astrocytes. Expressed in the visual center of the cerebral cortex. Also expressed in the eye, including photoreceptors, ganglion cells and trabecular meshwork.

The protein localises to the cell membrane. Its subcellular location is the postsynaptic cell membrane. It is found in the presynaptic cell membrane. It localises to the nucleus. Its function is as follows. Metabotropic receptor for glycine that controls synapse formation and function in the brain. Acts as an atypical G-protein coupled receptor that recruits and regulates the RGS7-GNB5 complex instead of activating G proteins. In absence of glycine ligand, promotes the GTPase activator activity of RGS7, increasing the GTPase activity of G protein alpha subunits, thereby driving them into their inactive GDP-bound form. Glycine-binding changes the conformation of the intracellular surface, inhibiting the GTPase activator activity of the RGS7-GNB5 complex, promoting G protein alpha subunits into their active GTP-bound form and regulating cAMP levels. Also able to bind taurine, a compound closely related to glycine, but with a two-fold lower affinity. Glycine receptor-dependent regulation of cAMP controls key ion channels, kinases and neurotrophic factors involved in neuronal excitability and synaptic transmission. Plays a pivotal role in regulating mood and cognition via its ability to regulate neuronal excitability in L2/L3 pyramidal neurons of the prefrontal cortex. Also involved in spatial learning by regulating hippocampal CA1 neuronal excitability. Acts as a synaptic organizer in the hippocampus, required for proper mossy fiber-CA3 neurocircuitry establishment, structure and function: induces presynaptic differentiation in contacting axons via its interaction with GPC4. In addition to glycine, may also act as a receptor for osteocalcin (Bglap or Bglap2) hormone: osteocalcin-binding initiates a signaling response that prevents neuronal apoptosis in the hippocampus and regulates the synthesis of neurotransmitters. This chain is Metabotropic glycine receptor, found in Mus musculus (Mouse).